We begin with the raw amino-acid sequence, 165 residues long: Pro-MCH (165 aa).

An N-terminal signal peptide occupies residues 1-21 (MAKMSLSSYLLILTFSLFSQG). The interval 68 to 88 (NDDSSFMNDEENKNSKNTGSK) is disordered. Ile143 is subject to Isoleucine amide. Cys153 and Cys162 are joined by a disulfide.

Belongs to the melanin-concentrating hormone family. In terms of processing, pro-MCH is processed differentially in the brain and in peripheral organs producing two neuropeptides; NEI and MCH. A third peptide, NGE, may also be produced. Preferential processing in neurons by prohormone convertase 2 (PC2) generates NEI. MCH is generated in neurons of the lateral hypothalmic area by several prohormone convertases including PC1/3, PC2 and PC5/6.

The protein localises to the secreted. Its function is as follows. MCH may act as a neurotransmitter or neuromodulator in a broad array of neuronal functions directed toward the regulation of goal-directed behavior, such as food intake, and general arousal. The sequence is that of Pro-MCH (PMCH) from Canis lupus familiaris (Dog).